A 303-amino-acid polypeptide reads, in one-letter code: Sulfate adenylyltransferase subunit 2 (303 aa).

Residues 282 to 303 form a disordered region; it reads SGRLIDHDESGSMEKKKREGYF.

It belongs to the PAPS reductase family. CysD subfamily. As to quaternary structure, heterodimer composed of CysD, the smaller subunit, and CysN.

The catalysed reaction is sulfate + ATP + H(+) = adenosine 5'-phosphosulfate + diphosphate. It participates in sulfur metabolism; hydrogen sulfide biosynthesis; sulfite from sulfate: step 1/3. Functionally, with CysN forms the ATP sulfurylase (ATPS) that catalyzes the adenylation of sulfate producing adenosine 5'-phosphosulfate (APS) and diphosphate, the first enzymatic step in sulfur assimilation pathway. APS synthesis involves the formation of a high-energy phosphoric-sulfuric acid anhydride bond driven by GTP hydrolysis by CysN coupled to ATP hydrolysis by CysD. The polypeptide is Sulfate adenylyltransferase subunit 2 (Maricaulis maris (strain MCS10) (Caulobacter maris)).